The sequence spans 349 residues: 1-acylglycerol-3-phosphate O-acyltransferase ABHD5 (349 aa).

The residue at position 2 (Ala2) is an N-acetylalanine. The AB hydrolase-1 domain occupies 77-184 (PLVLLHGFGG…LVEPWGFPER (108 aa)). Ser122 carries the phosphoserine modification. The HXXXXD motif motif lies at 327-332 (HYVYAD).

Belongs to the peptidase S33 family. ABHD4/ABHD5 subfamily. In terms of assembly, interacts with ADRP, PLIN and PNPLA2. Interacts with PLIN5; promotes interaction with PNPLA2. As to expression, widely expressed in various tissues, including lymphocytes, liver, skeletal muscle and brain. Expressed by upper epidermal layers and dermal fibroblasts in skin, hepatocytes and neurons (at protein level).

The protein resides in the cytoplasm. Its subcellular location is the lipid droplet. It localises to the cytosol. It catalyses the reaction a 1-acyl-sn-glycero-3-phosphate + an acyl-CoA = a 1,2-diacyl-sn-glycero-3-phosphate + CoA. The catalysed reaction is 1-(9Z-octadecenoyl)-sn-glycero-3-phosphate + hexadecanoyl-CoA = 1-(9Z)-octadecenoyl-2-hexadecanoyl-sn-glycero-3-phosphate + CoA. It carries out the reaction 1-(9Z-octadecenoyl)-sn-glycero-3-phosphate + octadecanoyl-CoA = 1-(9Z-octadecenoyl)-2-octadecanoyl-sn-glycero-3-phosphate + CoA. The enzyme catalyses 1-(9Z-octadecenoyl)-sn-glycero-3-phosphate + (9Z)-octadecenoyl-CoA = 1,2-di-(9Z-octadecenoyl)-sn-glycero-3-phosphate + CoA. It catalyses the reaction 1-(9Z-octadecenoyl)-sn-glycero-3-phosphate + (5Z,8Z,11Z,14Z)-eicosatetraenoyl-CoA = 1-(9Z)-octadecenoyl-2-(5Z,8Z,11Z,14Z)-eicosatetraenoyl-sn-glycero-3-phosphate + CoA. The catalysed reaction is eicosanoyl-CoA + 1-(9Z-octadecenoyl)-sn-glycero-3-phosphate = 1-(9Z)-octadecenoyl-2-eicosanoyl-sn-glycero-3-phosphate + CoA. It carries out the reaction 1-hexadecanoyl-sn-glycero-3-phosphate + (9Z)-octadecenoyl-CoA = 1-hexadecanoyl-2-(9Z-octadecenoyl)-sn-glycero-3-phosphate + CoA. The enzyme catalyses 1-octadecanoyl-sn-glycero-3-phosphate + (9Z)-octadecenoyl-CoA = 1-octadecanoyl-2-(9Z-octadecenoyl)-sn-glycero-3-phosphate + CoA. It catalyses the reaction 1-(5Z,8Z,11Z,14Z-eicosatetraenoyl)-sn-glycero-3-phosphate + (9Z)-octadecenoyl-CoA = 1-(5Z,8Z,11Z,14Z)-eicosatetraenoyl-2-(9Z)-octadecenoyl-sn-glycero-3-phosphate + CoA. Its activity is regulated as follows. Acyltransferase activity is inhibited by detergents such as Triton X-100 and 3-[(3-cholamidopropyl)dimethylammonio]-1-propanesulfonate (CHAPS). Acyltransferase activity is inhibited by the presence of magnesium and calcium. Its function is as follows. Coenzyme A-dependent lysophosphatidic acid acyltransferase that catalyzes the transfer of an acyl group on a lysophosphatidic acid. Functions preferentially with 1-oleoyl-lysophosphatidic acid followed by 1-palmitoyl-lysophosphatidic acid, 1-stearoyl-lysophosphatidic acid and 1-arachidonoyl-lysophosphatidic acid as lipid acceptor. Functions preferentially with arachidonoyl-CoA followed by oleoyl-CoA as acyl group donors. Functions in phosphatidic acid biosynthesis. May regulate the cellular storage of triacylglycerol through activation of the phospholipase PNPLA2. Involved in keratinocyte differentiation. Regulates lipid droplet fusion. This is 1-acylglycerol-3-phosphate O-acyltransferase ABHD5 from Homo sapiens (Human).